The primary structure comprises 82 residues: Mitotic-spindle organizing protein 1 (82 aa).

N-acetylalanine is present on Ala2.

It belongs to the MOZART1 family. As to quaternary structure, associates with the gamma-tubulin ring complex (gTuRC) consisting of TUBGCP2, TUBGCP3, TUBGCP4, TUBGCP5 and TUBGCP6 and gamma-tubulin TUBG1 or TUBG2; within the complex, interacts with TUBGCP3 and TUBGCP6 to form a luminal bridge with actin that stabilizes the initial structure during complex assembly. Interacts with TUBG1.

It is found in the cytoplasm. The protein localises to the cytoskeleton. It localises to the microtubule organizing center. Its subcellular location is the centrosome. The protein resides in the spindle. Its function is as follows. Required for the recruitment and the assembly of the gamma-tubulin ring complex (gTuRC) at the centrosome. The gTuRC regulates the minus-end nucleation of alpha-beta tubulin heterodimers that grow into microtubule protafilaments, a critical step in centrosome duplication and spindle formation. The protein is Mitotic-spindle organizing protein 1 (MZT1) of Homo sapiens (Human).